We begin with the raw amino-acid sequence, 103 residues long: MVESAFQPFSGDADEWFEEPRPQAGFFPSADWHLLKRDETYAAYAKDLDFMWRWVIVREERIVQEGCSISLESSIRAVTHVLNYFGMTEQRAPAEDRTGGVQH.

As to quaternary structure, the soluble methane monooxygenase (sMMO) consists of four components A/MMOH (composed of alpha/MmoX, beta/MmoY and gamma/MmoZ), B/MMOB (MmoB), C/MMOR (MmoC) and D/MMOD (MmoD).

This Methylococcus capsulatus (strain ATCC 33009 / NCIMB 11132 / Bath) protein is Methane monooxygenase component D (mmoD).